Consider the following 443-residue polypeptide: Chromosomal replication initiator protein DnaA (443 aa).

Positions 1–76 are domain I, interacts with DnaA modulators; sequence METKALWEKL…KSVLNSYVSV (76 aa). Positions 76-99 are domain II; that stretch reads VDFLTKEIFEKNTKKENKKEPINT. Residues 100 to 320 form a domain III, AAA+ region region; the sequence is VLSENALTFE…GLVNRLLFFG (221 aa). The ATP site is built by G145, G147, K148, and T149. Positions 321-443 are domain IV, binds dsDNA; the sequence is IQNDLGHIID…ESLKNEIIGK (123 aa).

The protein belongs to the DnaA family. As to quaternary structure, oligomerizes as a right-handed, spiral filament on DNA at oriC.

Its subcellular location is the cytoplasm. In terms of biological role, plays an essential role in the initiation and regulation of chromosomal replication. ATP-DnaA binds to the origin of replication (oriC) to initiate formation of the DNA replication initiation complex once per cell cycle. Binds the DnaA box (a 9 base pair repeat at the origin) and separates the double-stranded (ds)DNA. Forms a right-handed helical filament on oriC DNA; dsDNA binds to the exterior of the filament while single-stranded (ss)DNA is stabiized in the filament's interior. The ATP-DnaA-oriC complex binds and stabilizes one strand of the AT-rich DNA unwinding element (DUE), permitting loading of DNA polymerase. After initiation quickly degrades to an ADP-DnaA complex that is not apt for DNA replication. Binds acidic phospholipids. This chain is Chromosomal replication initiator protein DnaA, found in Mesoplasma florum (strain ATCC 33453 / NBRC 100688 / NCTC 11704 / L1) (Acholeplasma florum).